Here is a 339-residue protein sequence, read N- to C-terminus: Undifferentiated embryonic cell transcription factor 1 (339 aa).

Disordered stretches follow at residues 1 to 62 (MLLR…QRTP) and 144 to 270 (MGLL…QVAP). Residues Ser15, Ser18, Ser48, and Ser54 each carry the phosphoserine modification. Basic residues predominate over residues 154–170 (RVRRRSTGPGRPQRRGR). Low complexity-rich tracts occupy residues 171–193 (SSLS…PLAA) and 218–229 (TSSPPLTSTDTL). The segment covering 261–270 (GRASSPQVAP) has biased composition (polar residues). Residues 279 to 310 (QTLTHLGDISTVLGPLRDQLSTLNQHVEHLRG) form a leucine-zipper region.

Binds to the N-terminal region of ATF2. Associates with the TFIID complex through interaction with TBP. Post-translationally, phosphorylated. In terms of tissue distribution, expressed mainly in pluripotent cells with expression rapidly down-regulated upon cell differentiation.

It localises to the nucleus. Functionally, acts as a transcriptional coactivator of ATF2. The protein is Undifferentiated embryonic cell transcription factor 1 of Mus musculus (Mouse).